The chain runs to 246 residues: Carboxylesterase (246 aa).

The Nucleophile role is filled by Ser-93. Active-site charge relay system residues include Asp-192 and His-222.

Belongs to the lipase/esterase LIP3/BchO family. In terms of assembly, homodimer.

The catalysed reaction is a carboxylic ester + H2O = an alcohol + a carboxylate + H(+). In terms of biological role, involved in the detoxification of xenobiotics. Shows maximal activity with C6 substrates, with gradually decreasing activity from C8 to C12 substrates. No activity for higher chain length substrates acids rather than long-chain ones. In Bacillus subtilis (strain 168), this protein is Carboxylesterase (est).